A 239-amino-acid polypeptide reads, in one-letter code: MNPVRTLSATKAAFFSAYPRPINAAYRRVVEELLVELHLTTVNSAFVYDPFFALGLVTLYDSLMEAYHPPEQREAIFNALCKALHLKPEVLRKNARDLLELMRSGDPVQRYNLLCLKPEAEDVGGLKAILQRMTQPPYAYSRVLAVGLYTAYEAVATSLYKEPEERTRHFLEDVIGNLPFSPERVKKDLELYRSNLDRLKQARAIVEEMVKAARRQQERRQSTASLPETPAADRRESSG.

A coiled-coil region spans residues 183–219 (ERVKKDLELYRSNLDRLKQARAIVEEMVKAARRQQER). The segment covering 211–221 (KAARRQQERRQ) has biased composition (basic and acidic residues). The tract at residues 211-239 (KAARRQQERRQSTASLPETPAADRRESSG) is disordered.

It belongs to the THF1 family.

In terms of biological role, may be involved in photosynthetic membrane biogenesis. The sequence is that of Protein Thf1 from Synechococcus sp. (strain JA-3-3Ab) (Cyanobacteria bacterium Yellowstone A-Prime).